The primary structure comprises 140 residues: uncharacterized protein (140 aa).

An N-terminal signal peptide occupies residues 1 to 22; sequence MRLRWQTIVLLLLILGGASASA.

This is an uncharacterized protein from Archaeoglobus fulgidus (strain ATCC 49558 / DSM 4304 / JCM 9628 / NBRC 100126 / VC-16).